Consider the following 377-residue polypeptide: Chaperone protein DnaJ (377 aa).

The J domain maps to 5-70 (DYYEILGVER…EKRAAYDQYG (66 aa)). A CR-type zinc finger spans residues 134–212 (GITKDIQIQT…CHGDGRVHKT (79 aa)). Cys147, Cys150, Cys164, Cys167, Cys186, Cys189, Cys200, and Cys203 together coordinate Zn(2+). CXXCXGXG motif repeat units follow at residues 147-154 (CDHCNGSG), 164-171 (CPTCHGHG), 186-193 (CPHCHGTG), and 200-207 (CKKCHGDG).

Belongs to the DnaJ family. Homodimer. Zn(2+) serves as cofactor.

The protein localises to the cytoplasm. Its function is as follows. Participates actively in the response to hyperosmotic and heat shock by preventing the aggregation of stress-denatured proteins and by disaggregating proteins, also in an autonomous, DnaK-independent fashion. Unfolded proteins bind initially to DnaJ; upon interaction with the DnaJ-bound protein, DnaK hydrolyzes its bound ATP, resulting in the formation of a stable complex. GrpE releases ADP from DnaK; ATP binding to DnaK triggers the release of the substrate protein, thus completing the reaction cycle. Several rounds of ATP-dependent interactions between DnaJ, DnaK and GrpE are required for fully efficient folding. Also involved, together with DnaK and GrpE, in the DNA replication of plasmids through activation of initiation proteins. This chain is Chaperone protein DnaJ, found in Actinobacillus succinogenes (strain ATCC 55618 / DSM 22257 / CCUG 43843 / 130Z).